Consider the following 886-residue polypeptide: Alanine--tRNA ligase (886 aa).

Positions 564, 568, 666, and 670 each coordinate Zn(2+).

It belongs to the class-II aminoacyl-tRNA synthetase family. It depends on Zn(2+) as a cofactor.

It is found in the cytoplasm. It catalyses the reaction tRNA(Ala) + L-alanine + ATP = L-alanyl-tRNA(Ala) + AMP + diphosphate. In terms of biological role, catalyzes the attachment of alanine to tRNA(Ala) in a two-step reaction: alanine is first activated by ATP to form Ala-AMP and then transferred to the acceptor end of tRNA(Ala). Also edits incorrectly charged Ser-tRNA(Ala) and Gly-tRNA(Ala) via its editing domain. The protein is Alanine--tRNA ligase of Prochlorococcus marinus subsp. pastoris (strain CCMP1986 / NIES-2087 / MED4).